A 209-amino-acid polypeptide reads, in one-letter code: CAAX box protein 1 (209 aa).

The segment at 182–209 is disordered; the sequence is TAGRPPRDLSPSARPISSPPPETSCVLA. The residue at position 206 (Cys-206) is a Cysteine methyl ester. Cys-206 carries S-farnesyl cysteine lipidation. Residues 207–209 constitute a propeptide, removed in mature form; the sequence is VLA.

As to expression, ubiquitous.

It is found in the cell membrane. The chain is CAAX box protein 1 from Homo sapiens (Human).